Consider the following 174-residue polypeptide: ATP synthase subunit delta (174 aa).

Belongs to the ATPase delta chain family. As to quaternary structure, F-type ATPases have 2 components, F(1) - the catalytic core - and F(0) - the membrane proton channel. F(1) has five subunits: alpha(3), beta(3), gamma(1), delta(1), epsilon(1). F(0) has three main subunits: a(1), b(2) and c(10-14). The alpha and beta chains form an alternating ring which encloses part of the gamma chain. F(1) is attached to F(0) by a central stalk formed by the gamma and epsilon chains, while a peripheral stalk is formed by the delta and b chains.

It is found in the cell inner membrane. Functionally, f(1)F(0) ATP synthase produces ATP from ADP in the presence of a proton or sodium gradient. F-type ATPases consist of two structural domains, F(1) containing the extramembraneous catalytic core and F(0) containing the membrane proton channel, linked together by a central stalk and a peripheral stalk. During catalysis, ATP synthesis in the catalytic domain of F(1) is coupled via a rotary mechanism of the central stalk subunits to proton translocation. This protein is part of the stalk that links CF(0) to CF(1). It either transmits conformational changes from CF(0) to CF(1) or is implicated in proton conduction. This chain is ATP synthase subunit delta, found in Fusobacterium nucleatum subsp. nucleatum (strain ATCC 25586 / DSM 15643 / BCRC 10681 / CIP 101130 / JCM 8532 / KCTC 2640 / LMG 13131 / VPI 4355).